Here is a 326-residue protein sequence, read N- to C-terminus: uncharacterized protein (326 aa).

Solcar repeat units follow at residues 15–106 (EFLV…VRRV), 114–215 (ETHA…ATDF), and 234–322 (LKTW…SKAL). 6 helical membrane passes run 16-36 (FLVK…SVVA), 83-103 (TATL…YEQV), 120-140 (FLSG…LELI), 191-211 (FSVT…AYDL), 240-260 (LLCG…FEVC), and 294-314 (FFVG…TSFF).

The protein belongs to the mitochondrial carrier (TC 2.A.29) family.

It is found in the mitochondrion inner membrane. This is an uncharacterized protein from Schizosaccharomyces pombe (strain 972 / ATCC 24843) (Fission yeast).